Reading from the N-terminus, the 381-residue chain is Succinyl-diaminopimelate desuccinylase (381 aa).

H68 is a binding site for Zn(2+). D70 is an active-site residue. A Zn(2+)-binding site is contributed by D101. E135 functions as the Proton acceptor in the catalytic mechanism. Zn(2+)-binding residues include E136, E164, and H350.

This sequence belongs to the peptidase M20A family. DapE subfamily. As to quaternary structure, homodimer. The cofactor is Zn(2+). Co(2+) is required as a cofactor.

It carries out the reaction N-succinyl-(2S,6S)-2,6-diaminopimelate + H2O = (2S,6S)-2,6-diaminopimelate + succinate. It functions in the pathway amino-acid biosynthesis; L-lysine biosynthesis via DAP pathway; LL-2,6-diaminopimelate from (S)-tetrahydrodipicolinate (succinylase route): step 3/3. In terms of biological role, catalyzes the hydrolysis of N-succinyl-L,L-diaminopimelic acid (SDAP), forming succinate and LL-2,6-diaminopimelate (DAP), an intermediate involved in the bacterial biosynthesis of lysine and meso-diaminopimelic acid, an essential component of bacterial cell walls. This is Succinyl-diaminopimelate desuccinylase from Neisseria meningitidis serogroup C / serotype 2a (strain ATCC 700532 / DSM 15464 / FAM18).